A 258-amino-acid chain; its full sequence is Microtubule-associated protein RP/EB family member 1 (258 aa).

Residues 14–116 form the Calponin-homology (CH) domain; that stretch reads NLSRHDMLAW…FVQWFKKFFD (103 aa). The EB1 C-terminal domain maps to 175-245; it reads KKAAGDDESA…LYATDEGFVI (71 aa).

This sequence belongs to the MAPRE family.

The protein localises to the cytoplasm. Its subcellular location is the cytoskeleton. It localises to the microtubule organizing center. It is found in the centrosome. The protein resides in the golgi apparatus. The protein localises to the spindle. Its subcellular location is the spindle pole. In terms of biological role, plus-end tracking protein (+TIP) that binds to the plus-end of microtubules and regulates the dynamics of the microtubule cytoskeleton. Promotes cytoplasmic microtubule nucleation and elongation. Involved in mitotic spindle positioning by stabilizing microtubules and promoting dynamic connection between astral microtubules and the cortex during mitotic chromosome segregation. In Gallus gallus (Chicken), this protein is Microtubule-associated protein RP/EB family member 1 (MAPRE1).